We begin with the raw amino-acid sequence, 61 residues long: MACCRCDSSPGDYSGALLILFISFVFFYITSLSPQGNTYVHHFDSSSVKTQYVGISTNGDG.

Residues 1–12 (MACCRCDSSPGD) are Cytoplasmic-facing. Residues 13 to 33 (YSGALLILFISFVFFYITSLS) traverse the membrane as a helical; Signal-anchor for type II membrane protein segment. Residues 34–61 (PQGNTYVHHFDSSSVKTQYVGISTNGDG) are Lumenal-facing.

The protein belongs to the gammacarmovirus double gene block protein 2 family.

Its subcellular location is the host endoplasmic reticulum membrane. Cell-to-cell movement function. This Melon necrotic spot virus (MNSV) protein is Double gene block protein 2.